The sequence spans 45 residues: MFSINFLGLLPEAYAPFDPIVDVLPIIPLLFLLLAFVWQSSVRFR.

Positions 1-8 are excised as a propeptide; it reads MFSINFLG. Residues 17–37 form a helical membrane-spanning segment; it reads FDPIVDVLPIIPLLFLLLAFV.

Belongs to the PsbK family. As to quaternary structure, PSII is composed of 1 copy each of membrane proteins PsbA, PsbB, PsbC, PsbD, PsbE, PsbF, PsbH, PsbI, PsbJ, PsbK, PsbL, PsbM, PsbT, PsbY, PsbZ, Psb30/Ycf12, at least 3 peripheral proteins of the oxygen-evolving complex and a large number of cofactors. It forms dimeric complexes.

It is found in the plastid. The protein localises to the chloroplast thylakoid membrane. One of the components of the core complex of photosystem II (PSII). PSII is a light-driven water:plastoquinone oxidoreductase that uses light energy to abstract electrons from H(2)O, generating O(2) and a proton gradient subsequently used for ATP formation. It consists of a core antenna complex that captures photons, and an electron transfer chain that converts photonic excitation into a charge separation. In Euglena viridis (Cercaria viridis), this protein is Photosystem II reaction center protein K.